Reading from the N-terminus, the 169-residue chain is Ribosome maturation factor RimM (169 aa).

A PRC barrel domain is found at 93 to 166; the sequence is GEHEFYYHEI…RIQITPLPGL (74 aa).

This sequence belongs to the RimM family. In terms of assembly, binds ribosomal protein uS19.

Its subcellular location is the cytoplasm. Functionally, an accessory protein needed during the final step in the assembly of 30S ribosomal subunit, possibly for assembly of the head region. Essential for efficient processing of 16S rRNA. May be needed both before and after RbfA during the maturation of 16S rRNA. It has affinity for free ribosomal 30S subunits but not for 70S ribosomes. The protein is Ribosome maturation factor RimM of Exiguobacterium sibiricum (strain DSM 17290 / CCUG 55495 / CIP 109462 / JCM 13490 / 255-15).